The following is a 425-amino-acid chain: Enolase (425 aa).

Residue glutamine 163 coordinates (2R)-2-phosphoglycerate. Residue glutamate 205 is the Proton donor of the active site. Aspartate 242, glutamate 285, and aspartate 312 together coordinate Mg(2+). Positions 337, 366, 367, and 388 each coordinate (2R)-2-phosphoglycerate. Lysine 337 acts as the Proton acceptor in catalysis.

It belongs to the enolase family. It depends on Mg(2+) as a cofactor.

The protein localises to the cytoplasm. Its subcellular location is the secreted. It is found in the cell surface. It catalyses the reaction (2R)-2-phosphoglycerate = phosphoenolpyruvate + H2O. It participates in carbohydrate degradation; glycolysis; pyruvate from D-glyceraldehyde 3-phosphate: step 4/5. Its function is as follows. Catalyzes the reversible conversion of 2-phosphoglycerate (2-PG) into phosphoenolpyruvate (PEP). It is essential for the degradation of carbohydrates via glycolysis. This is Enolase from Cereibacter sphaeroides (strain ATCC 17029 / ATH 2.4.9) (Rhodobacter sphaeroides).